We begin with the raw amino-acid sequence, 117 residues long: Immunoglobulin heavy variable 3-74 (117 aa).

The N-terminal stretch at 1–19 is a signal peptide; sequence MEFGLSWVFLVAILKGVQC. The tract at residues 20-44 is framework-1; the sequence is EVQLVESGGGLVQPGGSLRLSCAAS. The Ig-like domain occupies 20-117; that stretch reads EVQLVESGGG…EDTAVYYCAR (98 aa). Residues Cys41 and Cys115 are joined by a disulfide bond. The segment at 45–52 is complementarity-determining-1; sequence GFTFSSYW. A framework-2 region spans residues 53–69; the sequence is MHWVRQAPGKGLVWVSR. Residues 70–77 form a complementarity-determining-2 region; it reads INSDGSST. The segment at 78 to 115 is framework-3; the sequence is SYADSVKGRFTISRDNAKNTLYLQMNSLRAEDTAVYYC. The complementarity-determining-3 stretch occupies residues 116 to 117; it reads AR.

In terms of assembly, immunoglobulins are composed of two identical heavy chains and two identical light chains; disulfide-linked.

It localises to the secreted. The protein localises to the cell membrane. In terms of biological role, v region of the variable domain of immunoglobulin heavy chains that participates in the antigen recognition. Immunoglobulins, also known as antibodies, are membrane-bound or secreted glycoproteins produced by B lymphocytes. In the recognition phase of humoral immunity, the membrane-bound immunoglobulins serve as receptors which, upon binding of a specific antigen, trigger the clonal expansion and differentiation of B lymphocytes into immunoglobulins-secreting plasma cells. Secreted immunoglobulins mediate the effector phase of humoral immunity, which results in the elimination of bound antigens. The antigen binding site is formed by the variable domain of one heavy chain, together with that of its associated light chain. Thus, each immunoglobulin has two antigen binding sites with remarkable affinity for a particular antigen. The variable domains are assembled by a process called V-(D)-J rearrangement and can then be subjected to somatic hypermutations which, after exposure to antigen and selection, allow affinity maturation for a particular antigen. The chain is Immunoglobulin heavy variable 3-74 from Homo sapiens (Human).